The following is a 458-amino-acid chain: UDP-N-acetylmuramate--L-alanine ligase (458 aa).

118–124 (GTHGKTT) serves as a coordination point for ATP.

The protein belongs to the MurCDEF family.

The protein resides in the cytoplasm. It carries out the reaction UDP-N-acetyl-alpha-D-muramate + L-alanine + ATP = UDP-N-acetyl-alpha-D-muramoyl-L-alanine + ADP + phosphate + H(+). It functions in the pathway cell wall biogenesis; peptidoglycan biosynthesis. Its function is as follows. Cell wall formation. This is UDP-N-acetylmuramate--L-alanine ligase from Clostridium botulinum (strain Langeland / NCTC 10281 / Type F).